The primary structure comprises 575 residues: Phosphoenolpyruvate-protein phosphotransferase (575 aa).

H191 serves as the catalytic Tele-phosphohistidine intermediate. The phosphoenolpyruvate site is built by R298 and R334. Mg(2+) contacts are provided by E435 and D459. Phosphoenolpyruvate-binding positions include 458-459 (ND) and R469. The active-site Proton donor is the C506.

Belongs to the PEP-utilizing enzyme family. As to quaternary structure, homodimer. The cofactor is Mg(2+).

It is found in the cytoplasm. It carries out the reaction L-histidyl-[protein] + phosphoenolpyruvate = N(pros)-phospho-L-histidyl-[protein] + pyruvate. In terms of biological role, general (non sugar-specific) component of the phosphoenolpyruvate-dependent sugar phosphotransferase system (sugar PTS). This major carbohydrate active-transport system catalyzes the phosphorylation of incoming sugar substrates concomitantly with their translocation across the cell membrane. Enzyme I transfers the phosphoryl group from phosphoenolpyruvate (PEP) to the phosphoryl carrier protein (HPr). The chain is Phosphoenolpyruvate-protein phosphotransferase (ptsI) from Lactococcus lactis subsp. cremoris (Streptococcus cremoris).